The primary structure comprises 134 residues: ATP synthase epsilon chain, chloroplastic (134 aa).

This sequence belongs to the ATPase epsilon chain family. F-type ATPases have 2 components, CF(1) - the catalytic core - and CF(0) - the membrane proton channel. CF(1) has five subunits: alpha(3), beta(3), gamma(1), delta(1), epsilon(1). CF(0) has three main subunits: a, b and c.

The protein resides in the plastid. It is found in the chloroplast thylakoid membrane. Its function is as follows. Produces ATP from ADP in the presence of a proton gradient across the membrane. The polypeptide is ATP synthase epsilon chain, chloroplastic (Pelargonium hortorum (Common geranium)).